Reading from the N-terminus, the 681-residue chain is DNA ligase (681 aa).

Residues 34–38 (DEEYD), 83–84 (SL), and glutamate 112 contribute to the NAD(+) site. The active-site N6-AMP-lysine intermediate is the lysine 114. 4 residues coordinate NAD(+): arginine 135, glutamate 169, lysine 285, and lysine 309. The Zn(2+) site is built by cysteine 403, cysteine 406, cysteine 422, and cysteine 427. In terms of domain architecture, BRCT spans 584–673 (TTSNILDGLT…GVELKESWKK (90 aa)).

The protein belongs to the NAD-dependent DNA ligase family. LigA subfamily. Mg(2+) serves as cofactor. It depends on Mn(2+) as a cofactor.

It catalyses the reaction NAD(+) + (deoxyribonucleotide)n-3'-hydroxyl + 5'-phospho-(deoxyribonucleotide)m = (deoxyribonucleotide)n+m + AMP + beta-nicotinamide D-nucleotide.. Its function is as follows. DNA ligase that catalyzes the formation of phosphodiester linkages between 5'-phosphoryl and 3'-hydroxyl groups in double-stranded DNA using NAD as a coenzyme and as the energy source for the reaction. It is essential for DNA replication and repair of damaged DNA. The protein is DNA ligase of Fervidobacterium nodosum (strain ATCC 35602 / DSM 5306 / Rt17-B1).